The primary structure comprises 486 residues: MKEQLIFDLSRSGRKGYSLSPLDIPERPADELLPSKFLRKEPAELPEMAESEVVRHFIRLSNLNYHVDKNMYPLGSCTMKYNPKINDYTCDLPGFASMHPLQPESTSQGALQLMYELAEMLKEIAGMKAVTLQPAAGAHGELTGILLIKKYHEKLGNKRHKLLVVDSAHGTNPASAALGGYECVSVKCDESGCTDMGDLRAKLDGEVAALMLTNPNTVGIFEKQIPEIEKLVHGNGSLLYMDGANMNALLGITRPGDMGFDVMHYNLHKTFSAPHGGGGPGSGPVGVSERLVEFLPVPVIEKFEKDGQTRYRLNSSKPNTIGRMMNFYGNFSVLVRAYTYIRMLGADGLRRVSENAIINANYLLQRLVEHYALPYPRPVMHEFCLSGDRQKKEHGVRTLDIAKRLLDYGYHAPTVYFPLIVSEALMIEPTETEAKETLNAFADAMIAIAEEAKSNPDLIKSAPTTTPVKRLDEAQASRQLNICCQH.

At lysine 269 the chain carries N6-(pyridoxal phosphate)lysine.

It belongs to the GcvP family. C-terminal subunit subfamily. The glycine cleavage system is composed of four proteins: P, T, L and H. In this organism, the P 'protein' is a heterodimer of two subunits. It depends on pyridoxal 5'-phosphate as a cofactor.

It catalyses the reaction N(6)-[(R)-lipoyl]-L-lysyl-[glycine-cleavage complex H protein] + glycine + H(+) = N(6)-[(R)-S(8)-aminomethyldihydrolipoyl]-L-lysyl-[glycine-cleavage complex H protein] + CO2. Functionally, the glycine cleavage system catalyzes the degradation of glycine. The P protein binds the alpha-amino group of glycine through its pyridoxal phosphate cofactor; CO(2) is released and the remaining methylamine moiety is then transferred to the lipoamide cofactor of the H protein. The chain is Probable glycine dehydrogenase (decarboxylating) subunit 2 from Chlorobaculum tepidum (strain ATCC 49652 / DSM 12025 / NBRC 103806 / TLS) (Chlorobium tepidum).